Here is a 209-residue protein sequence, read N- to C-terminus: GTP cyclohydrolase 1 (209 aa).

Positions 89, 92, and 163 each coordinate Zn(2+).

It belongs to the GTP cyclohydrolase I family. As to quaternary structure, toroid-shaped homodecamer, composed of two pentamers of five dimers.

The catalysed reaction is GTP + H2O = 7,8-dihydroneopterin 3'-triphosphate + formate + H(+). The protein operates within cofactor biosynthesis; 7,8-dihydroneopterin triphosphate biosynthesis; 7,8-dihydroneopterin triphosphate from GTP: step 1/1. This Sulfolobus acidocaldarius (strain ATCC 33909 / DSM 639 / JCM 8929 / NBRC 15157 / NCIMB 11770) protein is GTP cyclohydrolase 1.